Reading from the N-terminus, the 360-residue chain is Uptake hydrogenase small subunit (360 aa).

A signal peptide (tat-type signal) is located at residues 1-46 (MATAETFYDVIRRQGITRRSFTKFCSLTAASLGFGPGAATAMAEAL). [4Fe-4S] cluster-binding residues include Cys-62, Cys-65, Cys-160, Cys-194, His-232, Cys-235, Cys-260, and Cys-266. Residues Cys-275, Cys-294, and Cys-297 each contribute to the [3Fe-4S] cluster site.

This sequence belongs to the [NiFe]/[NiFeSe] hydrogenase small subunit family. In terms of assembly, heterodimer of a large and a small subunit. Requires [4Fe-4S] cluster as cofactor. [3Fe-4S] cluster serves as cofactor. In terms of processing, predicted to be exported by the Tat system. The position of the signal peptide cleavage has not been experimentally proven.

It is found in the cell membrane. The enzyme catalyses H2 + A = AH2. Functionally, this enzyme recycles the H(2) produced by nitrogenase to increase the production of ATP and to protect nitrogenase against inhibition or damage by O(2) under carbon- or phosphate-limited conditions. This Rhizobium leguminosarum bv. viciae protein is Uptake hydrogenase small subunit (hupA).